The primary structure comprises 151 residues: Endoribonuclease YbeY (151 aa).

Positions 108, 112, and 118 each coordinate Zn(2+).

The protein belongs to the endoribonuclease YbeY family. Requires Zn(2+) as cofactor.

The protein resides in the cytoplasm. In terms of biological role, single strand-specific metallo-endoribonuclease involved in late-stage 70S ribosome quality control and in maturation of the 3' terminus of the 16S rRNA. This chain is Endoribonuclease YbeY, found in Porphyromonas gingivalis (strain ATCC BAA-308 / W83).